Here is a 395-residue protein sequence, read N- to C-terminus: Nicotinamide/nicotinic acid mononucleotide adenylyltransferase 2 (395 aa).

Disordered regions lie at residues 1-34 (MDPT…SGPI) and 62-102 (KKNA…NGID). Residues 9-24 (FKPPQPNEELQPPPDP) are compositionally biased toward pro residues. Serine 85, serine 89, and serine 90 each carry phosphoserine. Residues serine 167 and phenylalanine 168 each contribute to the NAD(+) site. Residues histidine 175 and arginine 209 each coordinate ATP. Threonine 247, glycine 282, aspartate 284, tryptophan 295, arginine 314, and asparagine 345 together coordinate NAD(+). Position 350–353 (350–353 (TKVR)) interacts with ATP.

This sequence belongs to the eukaryotic NMN adenylyltransferase family. The cofactor is Co(2+).

It localises to the nucleus. The catalysed reaction is beta-nicotinamide D-ribonucleotide + ATP + H(+) = diphosphate + NAD(+). It carries out the reaction nicotinate beta-D-ribonucleotide + ATP + H(+) = deamido-NAD(+) + diphosphate. The protein operates within cofactor biosynthesis; NAD(+) biosynthesis; deamido-NAD(+) from nicotinate D-ribonucleotide: step 1/1. It participates in cofactor biosynthesis; NAD(+) biosynthesis; NAD(+) from nicotinamide D-ribonucleotide: step 1/1. Catalyzes the formation of NAD(+) from nicotinamide mononucleotide (NMN) and ATP. Can also use the deamidated form; nicotinic acid mononucleotide (NaMN) as substrate to form deamido-NAD(+) (NaAD). Key enzyme in both de novo and salvage pathways for NAD(+) biosynthesis. Predominantly acts in the salvage pathways via NMN. This chain is Nicotinamide/nicotinic acid mononucleotide adenylyltransferase 2, found in Saccharomyces cerevisiae (strain ATCC 204508 / S288c) (Baker's yeast).